The primary structure comprises 259 residues: Protein unc-50 homolog (259 aa).

At M1 the chain carries N-acetylmethionine. The segment covering 1-17 (MLPSTSVNSPAQGNGVL) has biased composition (polar residues). Positions 1 to 22 (MLPSTSVNSPAQGNGVLSSRDA) are disordered. The Cytoplasmic segment spans residues 1-82 (MLPSTSVNSP…TKDQWARDDP (82 aa)). S6 is modified (phosphoserine). A helical transmembrane segment spans residues 83-103 (AFLVLLSIWLCVSTIGFGFVL). The Lumenal portion of the chain corresponds to 104–115 (DMGFFETIKLLL). The chain crosses the membrane as a helical span at residues 116–136 (WVVFIDCVGVGLLISTLMWFI). Topologically, residues 137-163 (SNKYLVKRQSRDYDVEWGYAFDVHLNA) are cytoplasmic. Residues 164 to 184 (FYPLLVILHFIQLFFINHVIL) form a helical membrane-spanning segment. Over 185–187 (TDT) the chain is Lumenal. A helical transmembrane segment spans residues 188–208 (FIGYLVGNTLWLVAVGYYIYV). Residues 209-222 (TFLGYSALPFLKNT) lie on the Cytoplasmic side of the membrane. The chain crosses the membrane as a helical span at residues 223-243 (VILLYPFAPLILLYGLSLALG). Residues 244–259 (WNFTHTLCSFYKYRVK) lie on the Lumenal side of the membrane.

Belongs to the unc-50 family.

It is found in the nucleus inner membrane. Its subcellular location is the golgi apparatus membrane. Functionally, involved in the cell surface expression of neuronal nicotinic receptors. Binds RNA. The sequence is that of Protein unc-50 homolog (UNC50) from Bos taurus (Bovine).